A 145-amino-acid chain; its full sequence is D-aminoacyl-tRNA deacylase (145 aa).

The short motif at 137-138 is the Gly-cisPro motif, important for rejection of L-amino acids element; the sequence is GP.

Belongs to the DTD family. In terms of assembly, homodimer.

It localises to the cytoplasm. It carries out the reaction glycyl-tRNA(Ala) + H2O = tRNA(Ala) + glycine + H(+). The enzyme catalyses a D-aminoacyl-tRNA + H2O = a tRNA + a D-alpha-amino acid + H(+). Its function is as follows. An aminoacyl-tRNA editing enzyme that deacylates mischarged D-aminoacyl-tRNAs. Also deacylates mischarged glycyl-tRNA(Ala), protecting cells against glycine mischarging by AlaRS. Acts via tRNA-based rather than protein-based catalysis; rejects L-amino acids rather than detecting D-amino acids in the active site. By recycling D-aminoacyl-tRNA to D-amino acids and free tRNA molecules, this enzyme counteracts the toxicity associated with the formation of D-aminoacyl-tRNA entities in vivo and helps enforce protein L-homochirality. The polypeptide is D-aminoacyl-tRNA deacylase (Lactobacillus acidophilus (strain ATCC 700396 / NCK56 / N2 / NCFM)).